Reading from the N-terminus, the 633-residue chain is Extracellular metalloproteinase 3 (633 aa).

The N-terminal stretch at 1-18 (MHGLLLAGLLALPMNVLA) is a signal peptide. Residues 19 to 246 (YPAEQHASNV…VHNVVDYVAS (228 aa)) constitute a propeptide that is removed on maturation. Asparagine 410 carries N-linked (GlcNAc...) asparagine glycosylation. Histidine 429 is a Zn(2+) binding site. Residue glutamate 430 is part of the active site. Histidine 433 is a Zn(2+) binding site. N-linked (GlcNAc...) asparagine glycosylation is found at asparagine 480 and asparagine 622.

It belongs to the peptidase M36 family. Requires Zn(2+) as cofactor.

The protein resides in the secreted. In terms of biological role, secreted metalloproteinase probably acting as a virulence factor. This Trichophyton rubrum (Athlete's foot fungus) protein is Extracellular metalloproteinase 3 (MEP3).